A 159-amino-acid polypeptide reads, in one-letter code: Putative esterase DR_2406 (159 aa).

It belongs to the thioesterase PaaI family.

This is Putative esterase DR_2406 from Deinococcus radiodurans (strain ATCC 13939 / DSM 20539 / JCM 16871 / CCUG 27074 / LMG 4051 / NBRC 15346 / NCIMB 9279 / VKM B-1422 / R1).